Reading from the N-terminus, the 84-residue chain is MAYLKIVLVALMLVLGVSAMRLSDQEDQDVSVVKRAACKCDDDGPDIRSATLTGTVDFWNCNEGWEKCTAVYTAVASCCRKKKG.

Residues 1 to 19 (MAYLKIVLVALMLVLGVSA) form the signal peptide. The propeptide occupies 20 to 33 (MRLSDQEDQDVSVV). 3 cysteine pairs are disulfide-bonded: C38-C78, C40-C68, and C61-C79. The residue at position 83 (K83) is a Lysine amide.

It belongs to the sea anemone sodium channel inhibitory toxin family. Type II subfamily.

The protein localises to the secreted. Its subcellular location is the nematocyst. Its function is as follows. Binds specifically to voltage-gated sodium channels (Nav), thereby delaying their inactivation during signal transduction. The sequence is that of Delta-stichotoxin-Shd3a from Stichodactyla haddoni (Saddle carpet anemone).